Here is a 354-residue protein sequence, read N- to C-terminus: Arginase (354 aa).

Mn(2+)-binding residues include H136, D159, H161, and D163. L-arginine-binding residues include N165, S172, and D217. Residues D266 and D268 each coordinate Mn(2+).

It belongs to the arginase family. Homotrimer; oligomerization is dependent on Mn(2+) binding. Mn(2+) serves as cofactor.

It catalyses the reaction L-arginine + H2O = urea + L-ornithine. It participates in nitrogen metabolism; urea cycle; L-ornithine and urea from L-arginine: step 1/1. In terms of biological role, catalyzes the hydrolysis of L-arginine into urea and L-ornithine, which is a precursor for polyamine biosynthesis. May play a role in parasite intra-hepatic development during the host liver stage. In Plasmodium berghei (strain Anka), this protein is Arginase.